The chain runs to 223 residues: MACLGFQRHKAQLNLATRTWPCTLLFFLLFIPVFCKAMHVAQPAVVLASSRGIASFVCEYASPGKATEVRVTVLRQADSQVTEVCAATYMMGNELTFLDDSICTGTSSGNQVNLTIQGLRAMDTGLYICKVELMYPPPYYLGIGNGTQIYVIDPEPCPDSDFLLWILAAVSSGLFFYSFLLTAVSLSKMLKKRSPLTTGVYVKMPPTEPECEKQFQPYFIPIN.

A signal peptide spans 1-35 (MACLGFQRHKAQLNLATRTWPCTLLFFLLFIPVFC). Residues 36 to 161 (KAMHVAQPAV…IDPEPCPDSD (126 aa)) lie on the Extracellular side of the membrane. The region spanning 39–140 (HVAQPAVVLA…VELMYPPPYY (102 aa)) is the Ig-like V-type domain. The tract at residues 46–50 (VLASS) is homodimerization. 2 cysteine pairs are disulfide-bonded: Cys-58-Cys-129 and Cys-85-Cys-103. An N-linked (GlcNAc...) asparagine glycan is attached at Asn-113. The important for interaction with CD80 and CD86 stretch occupies residues 134–139 (MYPPPY). A glycan (N-linked (GlcNAc...) asparagine) is linked at Asn-145. The homodimerization stretch occupies residues 150–155 (YVIDPE). Residues 162-182 (FLLWILAAVSSGLFFYSFLLT) form a helical membrane-spanning segment. The Cytoplasmic segment spans residues 183–223 (AVSLSKMLKKRSPLTTGVYVKMPPTEPECEKQFQPYFIPIN). Position 201 is a phosphotyrosine; by TXK and JAK2 (Tyr-201).

In terms of assembly, homodimer; disulfide-linked. Binds to CD80/B7-1 and CD86/B7.2. Interacts with ICOSLG. In terms of processing, N-glycosylation is important for dimerization. Phosphorylation at Tyr-201 prevents binding to the AP-2 adapter complex, blocks endocytosis, and leads to retention of CTLA4 on the cell surface. As to expression, widely expressed with highest levels in lymphoid tissues. Detected in activated T-cells where expression levels are 30- to 50-fold less than CD28, the stimulatory coreceptor, on the cell surface following activation.

It is found in the cell membrane. Inhibitory receptor acting as a major negative regulator of T-cell responses. The affinity of CTLA4 for its natural B7 family ligands, CD80 and CD86, is considerably stronger than the affinity of their cognate stimulatory coreceptor CD28. The protein is Cytotoxic T-lymphocyte protein 4 (CTLA4) of Homo sapiens (Human).